The primary structure comprises 179 residues: MEQFHATTIVCVRRGNKVALGGDGQVTLGNIVIKGTARKIRRLYHDKILAGFAGATADAFTLQERFEAKLEKHQGHLMRAAVELTRDWRTDRVLRRLEAMLIVADAEHTLVLTGNGDVLEPEHGLAAIGSGGAYAQSAALALLRNTELSPQDIVKQSLEIAGDICIYTNQNHVIETLGE.

Thr7 is a catalytic residue. Gly162, Cys165, and Thr168 together coordinate Na(+).

The protein belongs to the peptidase T1B family. HslV subfamily. In terms of assembly, a double ring-shaped homohexamer of HslV is capped on each side by a ring-shaped HslU homohexamer. The assembly of the HslU/HslV complex is dependent on binding of ATP.

The protein resides in the cytoplasm. The enzyme catalyses ATP-dependent cleavage of peptide bonds with broad specificity.. With respect to regulation, allosterically activated by HslU binding. Protease subunit of a proteasome-like degradation complex believed to be a general protein degrading machinery. This chain is ATP-dependent protease subunit HslV, found in Bordetella petrii (strain ATCC BAA-461 / DSM 12804 / CCUG 43448).